The sequence spans 155 residues: MQVKQIEGVLNAKDIRFALVVGRFNDFIGQKLVEGAIDCICRHGGSEECIAMYRCPGAFELPMVAKKVALSGKYDAIITLGVIIRGSTPHFDVLAAEATKGIAQVALDTMVPIAFGVLTTENIEQAIERAGTKAGNKGFDAAMTAIEMVNLYRQI.

5-amino-6-(D-ribitylamino)uracil contacts are provided by residues phenylalanine 24, 58–60 (AFE), and 82–84 (VII). 87–88 (ST) is a binding site for (2S)-2-hydroxy-3-oxobutyl phosphate. Residue histidine 90 is the Proton donor of the active site. 5-amino-6-(D-ribitylamino)uracil is bound at residue phenylalanine 115. A (2S)-2-hydroxy-3-oxobutyl phosphate-binding site is contributed by arginine 129.

This sequence belongs to the DMRL synthase family.

The catalysed reaction is (2S)-2-hydroxy-3-oxobutyl phosphate + 5-amino-6-(D-ribitylamino)uracil = 6,7-dimethyl-8-(1-D-ribityl)lumazine + phosphate + 2 H2O + H(+). The protein operates within cofactor biosynthesis; riboflavin biosynthesis; riboflavin from 2-hydroxy-3-oxobutyl phosphate and 5-amino-6-(D-ribitylamino)uracil: step 1/2. Its function is as follows. Catalyzes the formation of 6,7-dimethyl-8-ribityllumazine by condensation of 5-amino-6-(D-ribitylamino)uracil with 3,4-dihydroxy-2-butanone 4-phosphate. This is the penultimate step in the biosynthesis of riboflavin. The polypeptide is 6,7-dimethyl-8-ribityllumazine synthase (Pelodictyon phaeoclathratiforme (strain DSM 5477 / BU-1)).